The primary structure comprises 131 residues: Holo-[acyl-carrier-protein] synthase (131 aa).

Mg(2+)-binding residues include Asp8 and Glu59.

This sequence belongs to the P-Pant transferase superfamily. AcpS family. The cofactor is Mg(2+).

The protein localises to the cytoplasm. It carries out the reaction apo-[ACP] + CoA = holo-[ACP] + adenosine 3',5'-bisphosphate + H(+). In terms of biological role, transfers the 4'-phosphopantetheine moiety from coenzyme A to a Ser of acyl-carrier-protein. The polypeptide is Holo-[acyl-carrier-protein] synthase (Orientia tsutsugamushi (strain Ikeda) (Rickettsia tsutsugamushi)).